The chain runs to 254 residues: Major prion protein (254 aa).

An N-terminal signal peptide occupies residues Met1–Cys22. The segment at Lys23 to Ser231 is interaction with GRB2, ERI3 and SYN1. Residues Arg25–Lys104 form a disordered region. Repeat copies occupy residues Pro51–Gln59, Pro60–Gln67, Pro68–Gln75, Pro76–Gln83, and Pro84–Gln91. The 5 X 8 AA tandem repeats of P-H-G-G-G-W-G-Q stretch occupies residues Pro51–Gln91. A compositionally biased stretch (gly residues) spans Gln52–Thr95. Residues His61, Gly62, Gly63, His69, Gly70, Gly71, His77, Gly78, Gly79, His85, Gly86, and Gly87 each coordinate Cu(2+). The tract at residues Gly90–Ser231 is prP27-30 (protease resistant core). Residues Cys179 and Cys214 are joined by a disulfide bond. 2 N-linked (GlcNAc...) asparagine glycosylation sites follow: Asn181 and Asn197. Ser231 is lipidated: GPI-anchor amidated serine. Residues Ser232 to Gly254 constitute a propeptide, removed in mature form.

It belongs to the prion family. As to quaternary structure, monomer and homodimer. Has a tendency to aggregate into amyloid fibrils containing a cross-beta spine, formed by a steric zipper of superposed beta-strands. Soluble oligomers may represent an intermediate stage on the path to fibril formation. Copper binding may promote oligomerization. Interacts with GRB2, APP, ERI3/PRNPIP and SYN1. Mislocalized cytosolically exposed PrP interacts with MGRN1; this interaction alters MGRN1 subcellular location and causes lysosomal enlargement. Interacts with KIAA1191.

The protein localises to the cell membrane. The protein resides in the golgi apparatus. Functionally, its primary physiological function is unclear. Has cytoprotective activity against internal or environmental stresses. May play a role in neuronal development and synaptic plasticity. May be required for neuronal myelin sheath maintenance. May play a role in iron uptake and iron homeostasis. Soluble oligomers are toxic to cultured neuroblastoma cells and induce apoptosis (in vitro). Association with GPC1 (via its heparan sulfate chains) targets PRNP to lipid rafts. Also provides Cu(2+) or Zn(2+) for the ascorbate-mediated GPC1 deaminase degradation of its heparan sulfate side chains. This is Major prion protein (PRNP) from Cricetulus griseus (Chinese hamster).